The sequence spans 277 residues: Large ribosomal subunit protein uL2 (277 aa).

2 disordered regions span residues 1–55 (MGIR…RHQG) and 217–277 (KRPS…KKKR). Over residues 37–55 (LHSKGGRNGHGRITARHQG) the composition is skewed to basic residues.

It belongs to the universal ribosomal protein uL2 family. In terms of assembly, part of the 50S ribosomal subunit. Forms a bridge to the 30S subunit in the 70S ribosome.

Its function is as follows. One of the primary rRNA binding proteins. Required for association of the 30S and 50S subunits to form the 70S ribosome, for tRNA binding and peptide bond formation. It has been suggested to have peptidyltransferase activity; this is somewhat controversial. Makes several contacts with the 16S rRNA in the 70S ribosome. The polypeptide is Large ribosomal subunit protein uL2 (Thermobifida fusca (strain YX)).